Reading from the N-terminus, the 224-residue chain is Ethylene-inducing xylanase 5 (224 aa).

A signal peptide spans 1 to 16 (MLKSLVVLLLTSRVIA). The GH11 domain maps to 32-218 (QATPNSQGTH…SSGFAEMTVA (187 aa)). N88 carries an N-linked (GlcNAc...) asparagine glycan. The Nucleophile role is filled by E117. E205 functions as the Proton donor in the catalytic mechanism.

It belongs to the glycosyl hydrolase 11 (cellulase G) family.

The catalysed reaction is Endohydrolysis of (1-&gt;4)-beta-D-xylosidic linkages in xylans.. Its pathway is glycan degradation; xylan degradation. In terms of biological role, endo-1,4-beta-xylanase involved in the hydrolysis of xylan, a major structural heterogeneous polysaccharide found in plant biomass representing the second most abundant polysaccharide in the biosphere, after cellulose. May act as an elicitor of plant defense responses in certain plants but does not exhibit any cell death when transiently expressed in N.benthamiana. In Verticillium dahliae (strain VdLs.17 / ATCC MYA-4575 / FGSC 10137) (Verticillium wilt), this protein is Ethylene-inducing xylanase 5.